The sequence spans 128 residues: Fluoride-specific ion channel FluC (128 aa).

Helical transmembrane passes span 5 to 25 (IVAIFVGAGFGALLRWFLSIG), 35 to 55 (LGTLASNLIGGYLIGIAVVAF), 67 to 87 (LFVITGFMGGLTTFSTYSVEV), and 96 to 116 (FGWALAVAALHLIGSFTLTGL). The Na(+) site is built by G75 and T78.

It belongs to the fluoride channel Fluc/FEX (TC 1.A.43) family.

The protein resides in the cell inner membrane. The catalysed reaction is fluoride(in) = fluoride(out). Na(+) is not transported, but it plays an essential structural role and its presence is essential for fluoride channel function. Functionally, fluoride-specific ion channel. Important for reducing fluoride concentration in the cell, thus reducing its toxicity. The chain is Fluoride-specific ion channel FluC from Burkholderia mallei (strain NCTC 10247).